Here is a 137-residue protein sequence, read N- to C-terminus: Small ribosomal subunit protein uS12 (137 aa).

A disordered region spans residues 1–57; it reads MPTINQLVRKPRKSKTKQSDSPVLNRGFNSKKKQFTNLNSPQKRGVCTRVGTMTPRK. The residue at position 102 (Asp102) is a 3-methylthioaspartic acid. Residues 118–137 form a disordered region; the sequence is SGVDGRRQGRSLYGTKKPKN.

This sequence belongs to the universal ribosomal protein uS12 family. As to quaternary structure, part of the 30S ribosomal subunit. Contacts proteins S8 and S17. May interact with IF1 in the 30S initiation complex.

Functionally, with S4 and S5 plays an important role in translational accuracy. Interacts with and stabilizes bases of the 16S rRNA that are involved in tRNA selection in the A site and with the mRNA backbone. Located at the interface of the 30S and 50S subunits, it traverses the body of the 30S subunit contacting proteins on the other side and probably holding the rRNA structure together. The combined cluster of proteins S8, S12 and S17 appears to hold together the shoulder and platform of the 30S subunit. This is Small ribosomal subunit protein uS12 from Staphylococcus epidermidis (strain ATCC 12228 / FDA PCI 1200).